Reading from the N-terminus, the 438-residue chain is Exodeoxyribonuclease 7 large subunit (438 aa).

Residues 406 to 438 (ATSTGPTDDIPSSAARLPASPAPDARPASGPES) form a disordered region.

Belongs to the XseA family. As to quaternary structure, heterooligomer composed of large and small subunits.

Its subcellular location is the cytoplasm. The catalysed reaction is Exonucleolytic cleavage in either 5'- to 3'- or 3'- to 5'-direction to yield nucleoside 5'-phosphates.. In terms of biological role, bidirectionally degrades single-stranded DNA into large acid-insoluble oligonucleotides, which are then degraded further into small acid-soluble oligonucleotides. This chain is Exodeoxyribonuclease 7 large subunit, found in Clavibacter sepedonicus (Clavibacter michiganensis subsp. sepedonicus).